Reading from the N-terminus, the 205-residue chain is Outer-membrane lipoprotein LolB (205 aa).

The first 17 residues, 1–17, serve as a signal peptide directing secretion; that stretch reads MRLRLFLAASALALLSG. C18 is lipidated: N-palmitoyl cysteine. C18 is lipidated: S-diacylglycerol cysteine.

Belongs to the LolB family. Monomer.

It localises to the cell outer membrane. Plays a critical role in the incorporation of lipoproteins in the outer membrane after they are released by the LolA protein. In Pseudomonas paraeruginosa (strain DSM 24068 / PA7) (Pseudomonas aeruginosa (strain PA7)), this protein is Outer-membrane lipoprotein LolB.